Consider the following 269-residue polypeptide: Voltage-gated hydrogen channel 1 (269 aa).

The Cytoplasmic segment spans residues M1–R96. T29 carries the post-translational modification Phosphothreonine. Positions E46 to R79 are disordered. S93 carries the phosphoserine modification. Residues F97–L117 form a helical membrane-spanning segment. Residues L118–A134 lie on the Extracellular side of the membrane. Residues F135–F157 traverse the membrane as a helical segment. The Cytoplasmic segment spans residues R158–K165. A helical transmembrane segment spans residues F166 to F186. At K187–A193 the chain is on the extracellular side. The helical transmembrane segment at L194–I214 threads the bilayer. The Cytoplasmic segment spans residues S215–N269. Residues E221–Q261 adopt a coiled-coil conformation.

Belongs to the voltage-gated proton channel (VPC) (TC 1.A.51) family. In terms of assembly, homodimer; each protomer forms its own proton conduction pathway. Post-translationally, phosphorylated in vitro by PRKCD. Phosphorylation may enhance channel gating. As to expression, enriched in immune tissues, such as bone marrow, macrophages and spleen.

The protein resides in the cell membrane. Its subcellular location is the apical cell membrane. It is found in the cytoplasmic vesicle. It localises to the phagosome membrane. The protein localises to the cell projection. The protein resides in the cilium. Its subcellular location is the flagellum membrane. It catalyses the reaction H(+)(in) = H(+)(out). With respect to regulation, the dimers display cooperative channel gating. The channel activity is inhibited by zinc ions. Functionally, voltage-gated proton-selective channel that conducts outward proton currents in response to intracellular acidification. Lacks a canonical ion-channel pore domain and mediates proton permeability via its voltage sensor domain. Provides for proton efflux that compensates for electron charge generated by NADPH oxidase activity either in the extracellular or phagosomal compartments, thus enabling the production of high levels of bactericidal reactive oxygen species during the respiratory burst. Opens when the pH of airway surface liquid exceeds 7 and contributes to respiratory epithelial acid secretion to maintain pH in the mucosa. This Mus musculus (Mouse) protein is Voltage-gated hydrogen channel 1.